A 106-amino-acid polypeptide reads, in one-letter code: uncharacterized protein (106 aa).

2 disordered regions span residues 27 to 47 (FSDS…DVSD) and 83 to 106 (SPAM…VQSK). Over residues 29–39 (DSEDEPDDEAS) the composition is skewed to acidic residues. Residues 94–106 (GIEREDRGGVQSK) are compositionally biased toward basic and acidic residues.

It localises to the mitochondrion. This is an uncharacterized protein from Arabidopsis thaliana (Mouse-ear cress).